We begin with the raw amino-acid sequence, 343 residues long: Cilia- and flagella-associated protein 36 (343 aa).

A phosphoserine mark is found at Ser-85 and Ser-147. Positions 147–181 (SDLEQEEMKILREVLRKSKEEYDQEEERKRKKQSS) form a coiled coil. Residues 165–191 (KEEYDQEEERKRKKQSSEGKMEEPPIY) are disordered. A Phosphoserine modification is found at Ser-201. The segment at 286 to 323 (SMRKDMRAKQIQNTEQKGKPTREAEEMTEKPEMTAEEK) is disordered. Over residues 301-323 (QKGKPTREAEEMTEKPEMTAEEK) the composition is skewed to basic and acidic residues.

This sequence belongs to the CFAP36 family. In terms of assembly, interacts with ARL3. As to expression, widely expressed (at protein level).

The protein localises to the nucleus. The protein resides in the cytoplasm. It is found in the cell projection. It localises to the cilium. Its subcellular location is the flagellum. Its function is as follows. May act as an effector for ARL3. The sequence is that of Cilia- and flagella-associated protein 36 from Rattus norvegicus (Rat).